The sequence spans 104 residues: L-rhamnose mutarotase (104 aa).

Y18 contributes to the substrate binding site. Catalysis depends on H22, which acts as the Proton donor. Residues Y41 and W76 to W77 contribute to the substrate site.

The protein belongs to the rhamnose mutarotase family. In terms of assembly, homodimer.

The protein resides in the cytoplasm. It catalyses the reaction alpha-L-rhamnose = beta-L-rhamnose. The protein operates within carbohydrate metabolism; L-rhamnose metabolism. Functionally, involved in the anomeric conversion of L-rhamnose. The polypeptide is L-rhamnose mutarotase (Clostridium beijerinckii (strain ATCC 51743 / NCIMB 8052) (Clostridium acetobutylicum)).